The sequence spans 363 residues: tRNA/tmRNA (uracil-C(5))-methyltransferase (363 aa).

5 residues coordinate S-adenosyl-L-methionine: glutamine 187, tyrosine 215, asparagine 220, glutamate 236, and aspartate 296. Cysteine 321 acts as the Nucleophile in catalysis. Glutamate 355 acts as the Proton acceptor in catalysis.

It belongs to the class I-like SAM-binding methyltransferase superfamily. RNA M5U methyltransferase family. TrmA subfamily.

It catalyses the reaction uridine(54) in tRNA + S-adenosyl-L-methionine = 5-methyluridine(54) in tRNA + S-adenosyl-L-homocysteine + H(+). The enzyme catalyses uridine(341) in tmRNA + S-adenosyl-L-methionine = 5-methyluridine(341) in tmRNA + S-adenosyl-L-homocysteine + H(+). Dual-specificity methyltransferase that catalyzes the formation of 5-methyluridine at position 54 (m5U54) in all tRNAs, and that of position 341 (m5U341) in tmRNA (transfer-mRNA). The chain is tRNA/tmRNA (uracil-C(5))-methyltransferase from Pseudomonas paraeruginosa (strain DSM 24068 / PA7) (Pseudomonas aeruginosa (strain PA7)).